The sequence spans 84 residues: Small ribosomal subunit protein uS17 (84 aa).

This sequence belongs to the universal ribosomal protein uS17 family. In terms of assembly, part of the 30S ribosomal subunit.

One of the primary rRNA binding proteins, it binds specifically to the 5'-end of 16S ribosomal RNA. The polypeptide is Small ribosomal subunit protein uS17 (Porphyromonas gingivalis (strain ATCC 33277 / DSM 20709 / CIP 103683 / JCM 12257 / NCTC 11834 / 2561)).